We begin with the raw amino-acid sequence, 438 residues long: Xylose isomerase (438 aa).

Active-site residues include H103 and D106. Mg(2+)-binding residues include E234, E270, H273, D298, D309, D311, and D341.

The protein belongs to the xylose isomerase family. As to quaternary structure, homotetramer. The cofactor is Mg(2+).

The protein resides in the cytoplasm. It carries out the reaction alpha-D-xylose = alpha-D-xylulofuranose. The polypeptide is Xylose isomerase (Bacteroides thetaiotaomicron (strain ATCC 29148 / DSM 2079 / JCM 5827 / CCUG 10774 / NCTC 10582 / VPI-5482 / E50)).